The chain runs to 159 residues: ATP synthase subunit b (159 aa).

A helical transmembrane segment spans residues 7–27; it reads VIFMTIINFCILVAILKHFFW.

Belongs to the ATPase B chain family. F-type ATPases have 2 components, F(1) - the catalytic core - and F(0) - the membrane proton channel. F(1) has five subunits: alpha(3), beta(3), gamma(1), delta(1), epsilon(1). F(0) has three main subunits: a(1), b(2) and c(10-14). The alpha and beta chains form an alternating ring which encloses part of the gamma chain. F(1) is attached to F(0) by a central stalk formed by the gamma and epsilon chains, while a peripheral stalk is formed by the delta and b chains.

The protein resides in the cell membrane. In terms of biological role, f(1)F(0) ATP synthase produces ATP from ADP in the presence of a proton or sodium gradient. F-type ATPases consist of two structural domains, F(1) containing the extramembraneous catalytic core and F(0) containing the membrane proton channel, linked together by a central stalk and a peripheral stalk. During catalysis, ATP synthesis in the catalytic domain of F(1) is coupled via a rotary mechanism of the central stalk subunits to proton translocation. Functionally, component of the F(0) channel, it forms part of the peripheral stalk, linking F(1) to F(0). The polypeptide is ATP synthase subunit b (Clostridium botulinum (strain Alaska E43 / Type E3)).